The following is a 321-amino-acid chain: Protein stand still (321 aa).

Coiled coils occupy residues 74 to 103 (KLHE…RKKA) and 147 to 167 (KQEQ…KANL). Basic and acidic residues predominate over residues 146 to 162 (HKQEQEGATRKLEDSTS). Disordered stretches follow at residues 146–166 (HKQE…DKAN) and 227–248 (QVPP…MEDV). Low complexity predominate over residues 235 to 244 (SKSSGSLASS). The stretch at 272–292 (QRDVLQRLERSMAQISQELHC) forms a coiled coil.

Germ cells specific. Expressed in all germ cells. During the first instar larvae, it is expressed in all germ cells of both sexes. In third instar larvae, it decreases in male germ cells while it remains in female germ cells. In adult ovary, it is expressed in cells of the germarium, including the stem cells. In the early previtellogenic stages, it is highly expressed in the nurse cells. During vitellogenesis, it is not translocated into the maturing egg. In testes, it is only expressed during some steps of male germline differentiation. At the apex testis, it is expressed at low level in stem cells and dividing spermatogonia, while in newly formed 16-cell cysts of primary spermatocytes, it is transiently but strongly expressed before vanishing during spermatocyte growth phase.

Its subcellular location is the nucleus. Functionally, essential in the female germline for proper survival, sex determination and differentiation. Participates in the transcriptional activation of Otu. Does not regulate the expression of Ovo. The protein is Protein stand still (stil) of Drosophila melanogaster (Fruit fly).